The chain runs to 295 residues: Alpha-ketoglutarate-dependent dioxygenase alkB homolog 3 (295 aa).

Residues 1 to 48 (MGDKRQRARVQGAWATPTKSQSAARPATPARSRPSQTPGPSWRSKEQQ) are disordered. Residues 22 to 35 (SAARPATPARSRPS) show a composition bias toward low complexity. Substrate contacts are provided by residues Trp115 and 141 to 143 (YTY). The Fe2OG dioxygenase domain occupies 172–278 (TFNSLLCNFY…RVNLTFRTVY (107 aa)). Leu177 carries the (4R)-5-hydroxyleucine; alternate modification. The residue at position 177 (Leu177) is a (4R)-5-oxoleucine; alternate. 179-181 (NFY) is a 2-oxoglutarate binding site. Residues His191 and Asp193 each contribute to the Fe cation site. Residue Asp194 coordinates substrate. His257 provides a ligand contact to Fe cation. Residues 269-275 (RVNLTFR) and Arg275 each bind 2-oxoglutarate.

It belongs to the alkB family. As to quaternary structure, interacts with the ASCC complex composed of ASCC1, ASCC2 and ASCC3. Interacts directly with ASCC3, and is thereby recruited to the ASCC complex. Interacts with OTUD4; the interaction is direct. Interacts with USP7 and USP9X. Requires Fe(2+) as cofactor. Ubiquitinated; undergoes 'Lys-48'-linked polyubiquitination. OTUD4 promotes USP7 and USP9X-dependent deubiquitination of 'Lys-48'-polyubiquitinated ALKBH3 promoting the repair of alkylated DNA lesions.

Its subcellular location is the nucleus. The protein localises to the cytoplasm. It catalyses the reaction an N(1)-methyladenosine in mRNA + 2-oxoglutarate + O2 = an adenosine in mRNA + formaldehyde + succinate + CO2. The catalysed reaction is a methylated nucleobase within DNA + 2-oxoglutarate + O2 = a nucleobase within DNA + formaldehyde + succinate + CO2. The enzyme catalyses an N(1)-methyl-2'-deoxyadenosine in single-stranded DNA + 2-oxoglutarate + O2 = a 2'-deoxyadenosine in single-stranded DNA + formaldehyde + succinate + CO2 + H(+). It carries out the reaction an N(3)-methyl-2'-deoxycytidine in single-stranded DNA + 2-oxoglutarate + O2 = a 2'-deoxycytidine in single-stranded DNA + formaldehyde + succinate + CO2 + H(+). It catalyses the reaction a 3,N(4)-etheno-2'-deoxycytidine in single-stranded DNA + 2-oxoglutarate + O2 + H2O = a 2'-deoxycytidine in single-stranded DNA + glyoxal + succinate + CO2. Activated by ascorbate. Its function is as follows. Dioxygenase that mediates demethylation of DNA and RNA containing 1-methyladenosine (m1A). Repairs alkylated DNA containing 1-methyladenosine (m1A) and 3-methylcytosine (m3C) by oxidative demethylation. Has a strong preference for single-stranded DNA. Able to process alkylated m3C within double-stranded regions via its interaction with ASCC3, which promotes DNA unwinding to generate single-stranded substrate needed for ALKBH3. Can repair exocyclic 3,N4-ethenocytosine adducs in single-stranded DNA. Also acts on RNA. Demethylates N(1)-methyladenosine (m1A) RNA, an epigenetic internal modification of messenger RNAs (mRNAs) highly enriched within 5'-untranslated regions (UTRs) and in the vicinity of start codons. Requires molecular oxygen, alpha-ketoglutarate and iron. The chain is Alpha-ketoglutarate-dependent dioxygenase alkB homolog 3 from Rattus norvegicus (Rat).